A 452-amino-acid chain; its full sequence is Phosphoglucosamine mutase (452 aa).

Ser108 serves as the catalytic Phosphoserine intermediate. The Mg(2+) site is built by Ser108, Asp247, Asp249, and Asp251. A Phosphoserine modification is found at Ser108.

Belongs to the phosphohexose mutase family. Mg(2+) serves as cofactor. In terms of processing, activated by phosphorylation.

The catalysed reaction is alpha-D-glucosamine 1-phosphate = D-glucosamine 6-phosphate. In terms of biological role, catalyzes the conversion of glucosamine-6-phosphate to glucosamine-1-phosphate. The sequence is that of Phosphoglucosamine mutase from Burkholderia pseudomallei (strain K96243).